Here is a 319-residue protein sequence, read N- to C-terminus: ADP-L-glycero-D-manno-heptose-6-epimerase (319 aa).

Residues 10-11 (FI), 31-32 (DD), Lys-38, Lys-53, and 79-83 (EGACS) each bind NADP(+). Tyr-144 (proton acceptor) is an active-site residue. Position 148 (Lys-148) interacts with NADP(+). Asn-173 is a substrate binding site. The NADP(+) site is built by Val-174 and Lys-182. Residue Lys-182 is the Proton acceptor of the active site. Substrate is bound by residues Ser-184, His-191, 205–208 (FEGC), Arg-218, and Tyr-282.

The protein belongs to the NAD(P)-dependent epimerase/dehydratase family. HldD subfamily. As to quaternary structure, homopentamer. NADP(+) is required as a cofactor.

The enzyme catalyses ADP-D-glycero-beta-D-manno-heptose = ADP-L-glycero-beta-D-manno-heptose. Its pathway is nucleotide-sugar biosynthesis; ADP-L-glycero-beta-D-manno-heptose biosynthesis; ADP-L-glycero-beta-D-manno-heptose from D-glycero-beta-D-manno-heptose 7-phosphate: step 4/4. In terms of biological role, catalyzes the interconversion between ADP-D-glycero-beta-D-manno-heptose and ADP-L-glycero-beta-D-manno-heptose via an epimerization at carbon 6 of the heptose. In Aeromonas salmonicida (strain A449), this protein is ADP-L-glycero-D-manno-heptose-6-epimerase.